The sequence spans 569 residues: Glutamate--tRNA ligase (569 aa).

A 'HIGH' region motif is present at residues 107 to 117; it reads PEPNGYPHIGH.

Belongs to the class-I aminoacyl-tRNA synthetase family. Glutamate--tRNA ligase type 2 subfamily.

It localises to the cytoplasm. It catalyses the reaction tRNA(Glu) + L-glutamate + ATP = L-glutamyl-tRNA(Glu) + AMP + diphosphate. Functionally, catalyzes the attachment of glutamate to tRNA(Glu) in a two-step reaction: glutamate is first activated by ATP to form Glu-AMP and then transferred to the acceptor end of tRNA(Glu). The protein is Glutamate--tRNA ligase of Nitrosopumilus maritimus (strain SCM1).